We begin with the raw amino-acid sequence, 592 residues long: Dictomallein-1 (592 aa).

The signal sequence occupies residues Met-1–Cys-19. Positions Pro-140–Tyr-402 constitute a Peptidase M66 domain. His-294 is a Zn(2+) binding site. Residue Glu-295 is part of the active site. His-298 and His-304 together coordinate Zn(2+).

It belongs to the dictomallein family. Requires Zn(2+) as cofactor.

The protein resides in the secreted. The chain is Dictomallein-1 (dtmlA) from Dictyostelium discoideum (Social amoeba).